Consider the following 600-residue polypeptide: Proline--tRNA ligase (600 aa).

Belongs to the class-II aminoacyl-tRNA synthetase family. ProS type 1 subfamily. As to quaternary structure, homodimer.

The protein localises to the cytoplasm. The catalysed reaction is tRNA(Pro) + L-proline + ATP = L-prolyl-tRNA(Pro) + AMP + diphosphate. Its function is as follows. Catalyzes the attachment of proline to tRNA(Pro) in a two-step reaction: proline is first activated by ATP to form Pro-AMP and then transferred to the acceptor end of tRNA(Pro). As ProRS can inadvertently accommodate and process non-cognate amino acids such as alanine and cysteine, to avoid such errors it has two additional distinct editing activities against alanine. One activity is designated as 'pretransfer' editing and involves the tRNA(Pro)-independent hydrolysis of activated Ala-AMP. The other activity is designated 'posttransfer' editing and involves deacylation of mischarged Ala-tRNA(Pro). The misacylated Cys-tRNA(Pro) is not edited by ProRS. The polypeptide is Proline--tRNA ligase (Acaryochloris marina (strain MBIC 11017)).